A 253-amino-acid chain; its full sequence is E3 ubiquitin-protein ligase MARCHF3 (253 aa).

An RING-CH-type zinc finger spans residues 63–123 (SPFNDRPMCR…ELCHFRFAVE (61 aa)). Residues cysteine 71, cysteine 74, cysteine 87, cysteine 89, histidine 97, cysteine 100, cysteine 113, and cysteine 116 each coordinate Zn(2+). 2 helical membrane passes run 145-165 (LFGDMVCFLFITPLATISGWL) and 182-202 (AVGLIALTVALFTIYLFWTLV). A phosphoserine mark is found at serine 237 and serine 243.

As to quaternary structure, interacts with MARCHF2 and STX6.

It localises to the cytoplasmic vesicle membrane. Its subcellular location is the early endosome membrane. The enzyme catalyses S-ubiquitinyl-[E2 ubiquitin-conjugating enzyme]-L-cysteine + [acceptor protein]-L-lysine = [E2 ubiquitin-conjugating enzyme]-L-cysteine + N(6)-ubiquitinyl-[acceptor protein]-L-lysine.. It participates in protein modification; protein ubiquitination. E3 ubiquitin-protein ligase which may be involved in endosomal trafficking. E3 ubiquitin ligases accept ubiquitin from an E2 ubiquitin-conjugating enzyme in the form of a thioester and then directly transfer the ubiquitin to targeted substrates. This chain is E3 ubiquitin-protein ligase MARCHF3 (MARCHF3), found in Bos taurus (Bovine).